A 74-amino-acid chain; its full sequence is Cecropin-P4 (74 aa).

The N-terminal stretch at 1 to 13 is a signal peptide; sequence MFLMYLLVQTTES. The propeptide at 45–74 is removed in mature form; sequence HRRSVAHQEEASLHVKTDELPSPDTVREQL. The disordered stretch occupies residues 51 to 74; the sequence is HQEEASLHVKTDELPSPDTVREQL.

It belongs to the cecropin family. As to expression, expressed in the body wall, intestine, uterus and ovary.

It is found in the secreted. Its function is as follows. Has antibacterial activity against several Gram-positive and Gram-negative bacteria. Is weakly active against yeasts. Acts by a nonpore mechanism. This Ascaris suum (Pig roundworm) protein is Cecropin-P4 (ASCEC-4).